The sequence spans 635 residues: Phosphatidylserine decarboxylase proenzyme 3 (635 aa).

The segment at Met-1 to Ala-42 is disordered. Gly-2 is lipidated: N-myristoyl glycine. Basic residues predominate over residues Ser-15 to Ser-31. Residues Gln-22–Lys-147 enclose the C2 domain. 2 EF-hand domains span residues Ala-180–Val-210 and Val-211–Gln-246. Residues Asp-188, Asp-190, Asp-192, Lys-194, Glu-199, Asp-224, Asn-226, Asp-228, and Glu-235 each contribute to the Ca(2+) site. Catalysis depends on charge relay system; for autoendoproteolytic cleavage activity residues Asp-442, His-498, and Ser-586. The active-site Schiff-base intermediate with substrate; via pyruvic acid; for decarboxylase activity is Ser-586. The residue at position 586 (Ser-586) is a Pyruvic acid (Ser); by autocatalysis.

It belongs to the phosphatidylserine decarboxylase family. PSD-B subfamily. Eukaryotic type II sub-subfamily. In terms of assembly, heterodimer of a large membrane-associated beta subunit and a small pyruvoyl-containing alpha subunit. It depends on pyruvate as a cofactor. In terms of processing, is synthesized initially as an inactive proenzyme. Formation of the active enzyme involves a self-maturation process in which the active site pyruvoyl group is generated from an internal serine residue via an autocatalytic post-translational modification. Two non-identical subunits are generated from the proenzyme in this reaction, and the pyruvate is formed at the N-terminus of the alpha chain, which is derived from the carboxyl end of the proenzyme. The autoendoproteolytic cleavage occurs by a canonical serine protease mechanism, in which the side chain hydroxyl group of the serine supplies its oxygen atom to form the C-terminus of the beta chain, while the remainder of the serine residue undergoes an oxidative deamination to produce ammonia and the pyruvoyl prosthetic group on the alpha chain. During this reaction, the Ser that is part of the protease active site of the proenzyme becomes the pyruvoyl prosthetic group, which constitutes an essential element of the active site of the mature decarboxylase. Expressed in roots, leaves, stems and flowers.

The protein resides in the endoplasmic reticulum membrane. It catalyses the reaction a 1,2-diacyl-sn-glycero-3-phospho-L-serine + H(+) = a 1,2-diacyl-sn-glycero-3-phosphoethanolamine + CO2. It participates in phospholipid metabolism; phosphatidylethanolamine biosynthesis; phosphatidylethanolamine from CDP-diacylglycerol: step 2/2. In terms of biological role, catalyzes the formation of phosphatidylethanolamine (PtdEtn) from phosphatidylserine (PtdSer). Plays a central role in phospholipid metabolism and in the interorganelle trafficking of phosphatidylserine. Contributes only to a minor proportion of PtdEtn production. In Arabidopsis thaliana (Mouse-ear cress), this protein is Phosphatidylserine decarboxylase proenzyme 3 (PSD3).